The sequence spans 254 residues: MKNTKLLLAIATSAALLTGCQNTHGIDTNMAISSGLNAYKAATLSDADAKAIANQGCAEMDSGNQVASKSSKYGKRLAKIAKALGNNINGTPVNYKVYMTSDVNAWAMANGCVRVYSGLMDMMNDNEIEGVLGHELGHVALGHSLAEMKASYAIVAARDAISATSGVASQLSRSQLGDIAEGAINAKYSRDKESEADDFSFDLLKKRGISTQGLVGSFETLASLDGGRTQSMFDSHPPSTERAQHIRDRIASGK.

The N-terminal stretch at 1-19 is a signal peptide; that stretch reads MKNTKLLLAIATSAALLTG. Residue Cys20 is the site of N-palmitoyl cysteine attachment. Cys20 carries the S-diacylglycerol cysteine lipid modification. His134 serves as a coordination point for Zn(2+). The active site involves Glu135. The Zn(2+) site is built by His138 and Glu193. Residues 227–254 form a disordered region; that stretch reads GRTQSMFDSHPPSTERAQHIRDRIASGK. Basic and acidic residues predominate over residues 242-254; that stretch reads RAQHIRDRIASGK.

It belongs to the peptidase M48B family. Zn(2+) serves as cofactor.

It localises to the cell inner membrane. Involved in the degradation of the LPS-assembly protein LptD. Degrades LptD that have engaged the Bam complex but are stalled at an early step in the outer membrane protein assembly process. This is Metalloprotease YcaL (ycaL) from Escherichia coli (strain K12).